The chain runs to 251 residues: Ribonuclease 3 (251 aa).

The RNase III domain occupies 3-125 (LATLETRLGH…LFGAVFLDAG (123 aa)). Glutamate 38 provides a ligand contact to Mg(2+). Aspartate 42 is an active-site residue. Residues aspartate 111 and glutamate 114 each coordinate Mg(2+). Glutamate 114 is an active-site residue. A DRBM domain is found at 152 to 222 (DAKTLLQEFL…AKLALEAALV (71 aa)).

Belongs to the ribonuclease III family. As to quaternary structure, homodimer. Mg(2+) serves as cofactor.

It localises to the cytoplasm. It carries out the reaction Endonucleolytic cleavage to 5'-phosphomonoester.. Digests double-stranded RNA. Involved in the processing of primary rRNA transcript to yield the immediate precursors to the large and small rRNAs (23S and 16S). Processes some mRNAs, and tRNAs when they are encoded in the rRNA operon. Processes pre-crRNA and tracrRNA of type II CRISPR loci if present in the organism. In Bordetella avium (strain 197N), this protein is Ribonuclease 3.